A 336-amino-acid polypeptide reads, in one-letter code: Protein ABHD13 (336 aa).

The helical; Signal-anchor for type II membrane protein transmembrane segment at 37-57 (FNMYGGVILLLLIFVSIAGIL) threads the bilayer. Residues Ser193, Asp268, and His298 each act as charge relay system in the active site. Asn299 carries an N-linked (GlcNAc...) asparagine glycan.

It belongs to the serine esterase family.

The protein resides in the membrane. The polypeptide is Protein ABHD13 (Xenopus laevis (African clawed frog)).